Here is a 1028-residue protein sequence, read N- to C-terminus: Contactin-3 (1028 aa).

Residues 1-19 (MMLSWKQLILLSFIGCLAG) form the signal peptide. Ig-like C2-type domains are found at residues 26-117 (PVFV…AKLQ), 122-208 (ENFK…ARVL), 227-313 (PKIE…GRLT), 318-402 (PYWV…AELK), 408-497 (PDFS…LVVT), and 499-593 (PTRI…AELI). Cystine bridges form between cysteine 50-cysteine 100, cysteine 144-cysteine 196, cysteine 249-cysteine 297, cysteine 339-cysteine 386, and cysteine 431-cysteine 479. 2 N-linked (GlcNAc...) asparagine glycosylation sites follow: asparagine 65 and asparagine 193. N-linked (GlcNAc...) asparagine glycans are attached at residues asparagine 377, asparagine 468, asparagine 489, and asparagine 538. Cysteine 521 and cysteine 577 are joined by a disulfide. 4 Fibronectin type-III domains span residues 600 to 698 (PPEN…TEEA), 703 to 800 (APSE…SAEE), 805 to 901 (APSH…TKKT), and 902 to 998 (PPSQ…TSMD). Residues 684 to 714 (GEPSLPSEKVRTEEAAPEVAPSEVSGGGGSR) are disordered. Asparagine 765, asparagine 860, asparagine 895, asparagine 913, asparagine 931, and asparagine 956 each carry an N-linked (GlcNAc...) asparagine glycan. Serine 1002 carries GPI-anchor amidated serine lipidation. Residues 1003-1028 (TSAISDIHPVSGYISVLLFFIVNALW) constitute a propeptide, removed in mature form.

Belongs to the immunoglobulin superfamily. Contactin family. As to quaternary structure, interacts with PTPRG. As to expression, specifically expressed in brain. Not expressed in peripheral tissues such as heart, lung, liver, spleen, kidney and skeletal muscle. In brain, it is restricted to subsets of neurons such as Purkinje cells of the cerebellum, granule cells of the dentate gyrus, and neurons in the superficial layers of the cerebral cortex.

The protein resides in the cell membrane. Its function is as follows. Contactins mediate cell surface interactions during nervous system development. Has some neurite outgrowth-promoting activity. This Rattus norvegicus (Rat) protein is Contactin-3 (Cntn3).